Reading from the N-terminus, the 307-residue chain is Nucleotide-binding protein Achl_1824 (307 aa).

Residue 30–37 (GMSGAGRS) coordinates ATP. GTP is bound at residue 81-84 (DVRS).

Belongs to the RapZ-like family.

Displays ATPase and GTPase activities. The protein is Nucleotide-binding protein Achl_1824 of Pseudarthrobacter chlorophenolicus (strain ATCC 700700 / DSM 12829 / CIP 107037 / JCM 12360 / KCTC 9906 / NCIMB 13794 / A6) (Arthrobacter chlorophenolicus).